Here is a 449-residue protein sequence, read N- to C-terminus: Deoxyguanosinetriphosphate triphosphohydrolase-like protein (449 aa).

Residues 1 to 27 (MTSSVWQERRHGEDKQRRNDHRSPYQR) are disordered. The span at 7-27 (QERRHGEDKQRRNDHRSPYQR) shows a compositional bias: basic and acidic residues. Residues 59–255 (RLTHSLEVSQ…MELADDIAYA (197 aa)) form the HD domain.

It belongs to the dGTPase family. Type 2 subfamily.

This chain is Deoxyguanosinetriphosphate triphosphohydrolase-like protein, found in Shewanella baltica (strain OS195).